The chain runs to 329 residues: Malate dehydrogenase 2 (329 aa).

Residue 12–18 coordinates NAD(+); the sequence is GAAGQIA. Substrate contacts are provided by Arg-93 and Arg-99. NAD(+) contacts are provided by residues Asn-106, Gln-113, and 130–132; that span reads VGN. The substrate site is built by Asn-132 and Arg-163. His-188 serves as the catalytic Proton acceptor.

The protein belongs to the LDH/MDH superfamily. MDH type 2 family.

The catalysed reaction is (S)-malate + NAD(+) = oxaloacetate + NADH + H(+). Catalyzes the reversible oxidation of malate to oxaloacetate. The sequence is that of Malate dehydrogenase 2 from Burkholderia thailandensis (strain ATCC 700388 / DSM 13276 / CCUG 48851 / CIP 106301 / E264).